A 103-amino-acid chain; its full sequence is Integration host factor subunit beta (103 aa).

A disordered region spans residues 62–81 (RNPKTGESVALPGKHVPHFK).

This sequence belongs to the bacterial histone-like protein family. As to quaternary structure, heterodimer of an alpha and a beta chain.

This protein is one of the two subunits of integration host factor, a specific DNA-binding protein that functions in genetic recombination as well as in transcriptional and translational control. The chain is Integration host factor subunit beta from Xanthomonas axonopodis pv. citri (strain 306).